Reading from the N-terminus, the 389-residue chain is Cytochrome b (389 aa).

A run of 8 helical transmembrane segments spans residues 32 to 52, 76 to 98, 113 to 133, 179 to 199, 225 to 245, 290 to 310, 325 to 345, and 353 to 373; these read FGFF…LLAM, WLLR…IHML, LWVS…LGYV, FFSL…LHII, FTIK…TFVF, LGVL…FLTI, LFWS…QPAA, and LYST…IYIV. Residues H82 and H96 each contribute to the heme b site. Residues H183 and H197 each coordinate heme b.

The protein belongs to the cytochrome b family. The main subunits of complex b-c1 are: cytochrome b, cytochrome c1 and the Rieske protein. Requires heme b as cofactor.

It localises to the mitochondrion inner membrane. Functionally, component of the ubiquinol-cytochrome c reductase complex (complex III or cytochrome b-c1 complex) that is part of the mitochondrial respiratory chain. The b-c1 complex mediates electron transfer from ubiquinol to cytochrome c. Contributes to the generation of a proton gradient across the mitochondrial membrane that is then used for ATP synthesis. This chain is Cytochrome b (cytB), found in Dictyostelium discoideum (Social amoeba).